A 115-amino-acid polypeptide reads, in one-letter code: Large ribosomal subunit protein bL19 (115 aa).

Belongs to the bacterial ribosomal protein bL19 family.

This protein is located at the 30S-50S ribosomal subunit interface and may play a role in the structure and function of the aminoacyl-tRNA binding site. The chain is Large ribosomal subunit protein bL19 from Streptococcus pneumoniae (strain JJA).